Consider the following 418-residue polypeptide: Coenzyme A biosynthesis bifunctional protein CoaBC (418 aa).

Residues 1–195 (MVDHKRIPKQ…ALPYDLAGRK (195 aa)) are phosphopantothenoylcysteine decarboxylase. The interval 196–418 (LLVTAGGTRE…IVTFLAGCSS (223 aa)) is phosphopantothenate--cysteine ligase. CTP-binding residues include aspartate 285, lysine 295, phenylalanine 336, lysine 354, and lysine 358.

In the N-terminal section; belongs to the HFCD (homo-oligomeric flavin containing Cys decarboxylase) superfamily. This sequence in the C-terminal section; belongs to the PPC synthetase family. Mg(2+) serves as cofactor. The cofactor is FMN.

The catalysed reaction is N-[(R)-4-phosphopantothenoyl]-L-cysteine + H(+) = (R)-4'-phosphopantetheine + CO2. The enzyme catalyses (R)-4'-phosphopantothenate + L-cysteine + CTP = N-[(R)-4-phosphopantothenoyl]-L-cysteine + CMP + diphosphate + H(+). It functions in the pathway cofactor biosynthesis; coenzyme A biosynthesis; CoA from (R)-pantothenate: step 2/5. Its pathway is cofactor biosynthesis; coenzyme A biosynthesis; CoA from (R)-pantothenate: step 3/5. Its function is as follows. Catalyzes two sequential steps in the biosynthesis of coenzyme A. In the first step cysteine is conjugated to 4'-phosphopantothenate to form 4-phosphopantothenoylcysteine. In the second step the latter compound is decarboxylated to form 4'-phosphopantotheine. The polypeptide is Coenzyme A biosynthesis bifunctional protein CoaBC (Mycobacterium bovis (strain ATCC BAA-935 / AF2122/97)).